The following is a 184-amino-acid chain: MKNVTDSFVSLGHWPSAGSFGFNTDILATNLINLSVVLGVLIFFGKGVLSDLLDNRKQRILNTIRNSEELREGAIEQLEKARARLRKIEIEADEFRVNGYSEIEREKLNLIDSTYKTLEQLENYKNETINFEQQKASNQVRQRVFQQALQGALGTLNSCLNNELHLRTISANIGILAAMKQITD.

The chain crosses the membrane as a helical span at residues 27 to 49; sequence LATNLINLSVVLGVLIFFGKGVL.

The protein belongs to the ATPase B chain family. F-type ATPases have 2 components, F(1) - the catalytic core - and F(0) - the membrane proton channel. F(1) has five subunits: alpha(3), beta(3), gamma(1), delta(1), epsilon(1). F(0) has four main subunits: a(1), b(1), b'(1) and c(10-14). The alpha and beta chains form an alternating ring which encloses part of the gamma chain. F(1) is attached to F(0) by a central stalk formed by the gamma and epsilon chains, while a peripheral stalk is formed by the delta, b and b' chains.

The protein localises to the plastid. The protein resides in the chloroplast thylakoid membrane. Its function is as follows. F(1)F(0) ATP synthase produces ATP from ADP in the presence of a proton or sodium gradient. F-type ATPases consist of two structural domains, F(1) containing the extramembraneous catalytic core and F(0) containing the membrane proton channel, linked together by a central stalk and a peripheral stalk. During catalysis, ATP synthesis in the catalytic domain of F(1) is coupled via a rotary mechanism of the central stalk subunits to proton translocation. Functionally, component of the F(0) channel, it forms part of the peripheral stalk, linking F(1) to F(0). The chain is ATP synthase subunit b, chloroplastic from Helianthus annuus (Common sunflower).